Here is a 76-residue protein sequence, read N- to C-terminus: Vasotab (76 aa).

An N-terminal signal peptide occupies residues 1–20 (MKFALFSVLVVLLIATFVAA). In terms of domain architecture, Kazal-like spans 21–76 (DECPRICTADYRPVCGTPSGGRRSANRTFGNQCSLNAHNCLNKGDTYDKLHDGECK). 3 cysteine pairs are disulfide-bonded: Cys23/Cys60, Cys27/Cys53, and Cys35/Cys75.

Expressed by the salivary gland.

The protein localises to the secreted. Functionally, vasodilator protein that inhibits vasoconstriction of isolated rat femoral artery induced by phenylephrine. Since platelet aggregation and vasoconstriction are key hemostatic responses, particularly in small wounds, this protein likely participates in the antihemostatic responses during blood feeding. Blocks L-type calcium channels (Cav1/CACNA1) in left ventricular myocytes isolated from rat hearts. In Hybomitra bimaculata (Horse fly), this protein is Vasotab.